We begin with the raw amino-acid sequence, 82 residues long: Small ribosomal subunit protein bS16 (82 aa).

It belongs to the bacterial ribosomal protein bS16 family.

The polypeptide is Small ribosomal subunit protein bS16 (Enterobacter sp. (strain 638)).